The primary structure comprises 312 residues: Olfactory receptor 1J21 (312 aa).

7 helical membrane-spanning segments follow: residues 29–49, 58–78, 95–115, 143–163, 197–217, 241–261, and 272–292; these read ALFL…ILLI, PMYF…SVTA, AGCV…NFLL, LLVM…TLLF, LVIL…ILVS, CGSH…LYFF, and VIVA…IYSL.

This sequence belongs to the G-protein coupled receptor 1 family.

The protein localises to the cell membrane. Its function is as follows. Odorant receptor. Activated by (+) and (-)-carvone. This is Olfactory receptor 1J21 from Mus musculus (Mouse).